Reading from the N-terminus, the 48-residue chain is M-oxotoxin-Ot1b (48 aa).

The protein resides in the secreted. It localises to the target cell membrane. In terms of biological role, disrupts cell membranes, particularly those rich in phosphocholine, through formation of pores. Has antimicrobial activity, hemolytic activity and insecticidal activity. The sequence is that of M-oxotoxin-Ot1b from Oxyopes takobius (Lynx spider).